The sequence spans 425 residues: UPF0597 protein KPN78578_43500 (425 aa).

The protein belongs to the UPF0597 family.

This is UPF0597 protein KPN78578_43500 from Klebsiella pneumoniae subsp. pneumoniae (strain ATCC 700721 / MGH 78578).